Reading from the N-terminus, the 357-residue chain is Prostaglandin E2 receptor EP2 subtype (357 aa).

Residues 1-24 (MDNSFNDSRRVENCESRQYLLSDE) are Extracellular-facing. Asparagine 6 carries an N-linked (GlcNAc...) asparagine glycan. A helical membrane pass occupies residues 25–48 (SPAISSVMFTAGVLGNLIALALLA). Residues 49–66 (RRWRGDTGCSAGSRTSIS) lie on the Cytoplasmic side of the membrane. A helical transmembrane segment spans residues 67–92 (LFHVLVTELVLTDLLGTCLISPVVLA). Topologically, residues 93 to 112 (SYSRNQTLVALAPESRACTY) are extracellular. Cysteine 110 and cysteine 188 are oxidised to a cystine. Residues 113 to 133 (FAFTMTFFSLATMLMLFAMAL) traverse the membrane as a helical segment. Residues 134-152 (ERYLAIGHPYFYRRRVSRR) are Cytoplasmic-facing. The chain crosses the membrane as a helical span at residues 153 to 177 (GGLAVLPAIYGVSLLFCSLPLLNYG). Over 178 to 199 (EYVQYCPGTWCFIQHGRTAYLQ) the chain is Extracellular. A helical transmembrane segment spans residues 200-224 (LYATVLLLLIVAVLGCNISVILNLI). Residues 225–262 (RMQLRSKRSRCGLSGSSLRGPGSRRRGERTSMAEETDH) lie on the Cytoplasmic side of the membrane. A compositionally biased stretch (low complexity) spans 235–245 (CGLSGSSLRGP). Residues 235-255 (CGLSGSSLRGPGSRRRGERTS) are disordered. The helical transmembrane segment at 263–286 (LILLAIMTITFAVCSLPFTIFAYM) threads the bilayer. The Extracellular segment spans residues 287 to 299 (DETSSRKEKWDLR). A helical membrane pass occupies residues 300 to 323 (ALRFLSVNSIIDPWVFVILRPPVL). Residues 324–357 (RLMRSVLCCRTSLRAPEAPGASCSTQQTDLCGQL) lie on the Cytoplasmic side of the membrane.

The protein belongs to the G-protein coupled receptor 1 family.

The protein resides in the cell membrane. In terms of biological role, receptor for prostaglandin E2 (PGE2). The activity of this receptor is mediated by G(s) proteins that stimulate adenylate cyclase. The subsequent raise in intracellular cAMP is responsible for the relaxing effect of this receptor on smooth muscle. This chain is Prostaglandin E2 receptor EP2 subtype (Ptger2), found in Rattus norvegicus (Rat).